Consider the following 185-residue polypeptide: Protein GrpE (185 aa).

The interval 1 to 22 (MTASQEPVDQAPESNEPAPAVP) is disordered.

It belongs to the GrpE family. Homodimer.

It is found in the cytoplasm. Functionally, participates actively in the response to hyperosmotic and heat shock by preventing the aggregation of stress-denatured proteins, in association with DnaK and GrpE. It is the nucleotide exchange factor for DnaK and may function as a thermosensor. Unfolded proteins bind initially to DnaJ; upon interaction with the DnaJ-bound protein, DnaK hydrolyzes its bound ATP, resulting in the formation of a stable complex. GrpE releases ADP from DnaK; ATP binding to DnaK triggers the release of the substrate protein, thus completing the reaction cycle. Several rounds of ATP-dependent interactions between DnaJ, DnaK and GrpE are required for fully efficient folding. The sequence is that of Protein GrpE from Bordetella petrii (strain ATCC BAA-461 / DSM 12804 / CCUG 43448).